Consider the following 278-residue polypeptide: 4-deoxy-L-threo-5-hexosulose-uronate ketol-isomerase (278 aa).

Zn(2+) contacts are provided by His196, His198, Glu203, and His245.

Belongs to the KduI family. The cofactor is Zn(2+).

The enzyme catalyses 5-dehydro-4-deoxy-D-glucuronate = 3-deoxy-D-glycero-2,5-hexodiulosonate. It functions in the pathway glycan metabolism; pectin degradation; 2-dehydro-3-deoxy-D-gluconate from pectin: step 4/5. Functionally, catalyzes the isomerization of 5-dehydro-4-deoxy-D-glucuronate to 3-deoxy-D-glycero-2,5-hexodiulosonate. The polypeptide is 4-deoxy-L-threo-5-hexosulose-uronate ketol-isomerase (Salmonella paratyphi A (strain ATCC 9150 / SARB42)).